The following is a 318-amino-acid chain: NADH-ubiquinone oxidoreductase chain 1 (318 aa).

The next 8 helical transmembrane spans lie at 2-22, 70-90, 100-120, 136-156, 171-191, 231-251, 253-273, and 294-314; these read FLMNILCLIIPILLAMAFLTL, MFILAPTLAFSLALSMWIPMP, LGVLFILALSSLAVYSILWSG, VAQTISYEVTLAIILLSIMML, HLWLIFPLWPLAMMWFISTLA, IIMMNALTTILFLGALHNPLF, ELFTVNFVTKTLLLTVTFLWV, and LPLTLALCMLHVSTPTMLAGI.

This sequence belongs to the complex I subunit 1 family.

It localises to the mitochondrion inner membrane. The enzyme catalyses a ubiquinone + NADH + 5 H(+)(in) = a ubiquinol + NAD(+) + 4 H(+)(out). Its function is as follows. Core subunit of the mitochondrial membrane respiratory chain NADH dehydrogenase (Complex I) that is believed to belong to the minimal assembly required for catalysis. Complex I functions in the transfer of electrons from NADH to the respiratory chain. The immediate electron acceptor for the enzyme is believed to be ubiquinone. This Priodontes maximus (Giant armadillo) protein is NADH-ubiquinone oxidoreductase chain 1 (MT-ND1).